Consider the following 797-residue polypeptide: LPS-assembly protein LptD (797 aa).

Positions 1-30 (MKEGRKRLRAGYCYMLAGVVGVASTGSSRA) are cleaved as a signal peptide.

The protein belongs to the LptD family. In terms of assembly, component of the lipopolysaccharide transport and assembly complex. Interacts with LptE and LptA.

The protein resides in the cell outer membrane. Functionally, together with LptE, is involved in the assembly of lipopolysaccharide (LPS) at the surface of the outer membrane. This Hahella chejuensis (strain KCTC 2396) protein is LPS-assembly protein LptD.